The sequence spans 131 residues: Profilin-5 (131 aa).

The cysteines at positions 13 and 115 are disulfide-linked. Positions 81–97 (AVIRGKKGAGGITVKKT) match the Involved in PIP2 interaction motif. T111 is subject to Phosphothreonine.

It belongs to the profilin family. In terms of assembly, occurs in many kinds of cells as a complex with monomeric actin in a 1:1 ratio. Post-translationally, phosphorylated by MAP kinases.

It is found in the cytoplasm. The protein resides in the cytoskeleton. Its function is as follows. Binds to actin and affects the structure of the cytoskeleton. At high concentrations, profilin prevents the polymerization of actin, whereas it enhances it at low concentrations. This is Profilin-5 from Corylus avellana (European hazel).